The following is a 435-amino-acid chain: MSIITDVYAREVLDSRGNPTLEVEVYTESGAFGRGMVPSGASTGEHEAVELRDGDKSRYLGLGTQKAVDNVNNIIAEAIIGYDVRDQQAIDRAMIALDGTPNKGKLGANAILGVSIAVARAAADYLEVPLYTYLGGFNTKVLPTPMMNIINGGSHSDAPIAFQEFMIMPVGAPTFKEGLRWGAEVFHALKKILKERGLVTAVGDEGGFAPKFEGTEDGVETILKAIEAAGYEAGENGIMIGFDCASSEFYDKERKVYDYTKFEGEGAAVRTSAEQVDYLEELVNKYPIITIEDGMDENDWDGWKVLTERLGKRVQLVGDDFFVTNTEYLARGIKENAANSILIKVNQIGTLTETFEAIEMAKEAGYTAVVSHRSGETEDSTIADIAVATNAGQIKTGSLSRTDRIAKYNQLLRIEDQLGEVAQYKGIKSFYNLKK.

Substrate contacts are provided by H155 and E164. The Proton donor role is filled by E205. Mg(2+) contacts are provided by D243, E292, and D319. Substrate-binding positions include E292, D319, K344, 371 to 374 (SHRS), and K395. K344 (proton acceptor) is an active-site residue.

It belongs to the enolase family. In terms of assembly, homooctamer. It depends on Mg(2+) as a cofactor.

Its subcellular location is the cytoplasm. It is found in the secreted. It localises to the cell surface. It carries out the reaction (2R)-2-phosphoglycerate = phosphoenolpyruvate + H2O. It participates in carbohydrate degradation; glycolysis; pyruvate from D-glyceraldehyde 3-phosphate: step 4/5. Catalyzes the reversible conversion of 2-phosphoglycerate (2-PG) into phosphoenolpyruvate (PEP). It is essential for the degradation of carbohydrates via glycolysis. In terms of biological role, 'Moonlights' as a plasminogen receptor and plasmin activator. Binds host (human) plasminogen in vitro; enhances the activity of host tissue-specific plasminogen activator (tPA). In Streptococcus pyogenes serotype M1, this protein is Enolase.